The following is a 934-amino-acid chain: Coiled-coil domain-containing protein 39 (934 aa).

4 coiled-coil regions span residues 17-133 (IPVA…DGLK), 164-512 (SQQD…HNDL), 540-615 (VDRS…SQIR), and 664-826 (VIKA…EQDI). The disordered stretch occupies residues 866–934 (LPTAKGPSSR…NIPKGKKLNK (69 aa)). Low complexity predominate over residues 873–892 (SSRSSSQSSLSSIRSLEDSI). Phosphoserine is present on residues Ser887 and Ser895. A compositionally biased stretch (low complexity) spans 912–925 (RSDSSRSSSGSNSN).

The protein belongs to the CCDC39 family.

It localises to the cytoplasm. Its subcellular location is the cytoskeleton. It is found in the cilium axoneme. Functionally, required for assembly of dynein regulatory complex (DRC) and inner dynein arm (IDA) complexes, which are responsible for ciliary beat regulation, thereby playing a central role in motility in cilia and flagella. Probably acts together with CCDC40 to form a molecular ruler that determines the 96 nanometer (nm) repeat length and arrangements of components in cilia and flagella. Not required for outer dynein arm complexes assembly. The chain is Coiled-coil domain-containing protein 39 (Ccdc39) from Rattus norvegicus (Rat).